Reading from the N-terminus, the 468-residue chain is MPAPTTTLLIEGSFTELADEFAQYIDALRKNEGASLQSEVAPLIEPLRQQEQSEEEPDRKQRDEVLKKLVGAAAVLNAAPEREIISAYNLLVHLVHQASNPDIFLSRICTYLAKPITTSPQFGPTLAISILTTIFNTLAPTDSSRFHVLLAIVAVIRQSGSSYAFEALKPQLAAQLPTWLSAWELDDEDAQKLHLAIADAAQASGDLELAQTHVVQALQTIPANESSSKEARDLAVRALTSALKSPAVFDFTSLTAADAIQALRSSDSTLFELLEIFTADTLDAYEDFIAATPLETISGGVLVDGAEALQTKMRLLTLASLAASTPSRSLPYTTIASALRVPVEDVEKWVIDTIRAGLVEGKLSQLRSEFLVHRATYRVFGEKQWAEVQGRLMVWRRSLESVLGVLRTERERYIRESMQAAAEEVGQGKSGDKGAKGGDRRRNPQQQQQSQPSQPQQAREVELVGGAE.

Residues valine 40–glutamine 61 form a disordered region. The region spanning aspartate 206–tyrosine 377 is the PCI domain. Positions glutamine 419 to glutamate 468 are disordered. Over residues serine 430–arginine 442 the composition is skewed to basic and acidic residues. A compositionally biased stretch (low complexity) spans proline 444–glutamine 457.

This sequence belongs to the eIF-3 subunit M family. Component of the eukaryotic translation initiation factor 3 (eIF-3) complex.

It is found in the cytoplasm. In terms of biological role, component of the eukaryotic translation initiation factor 3 (eIF-3) complex, which is involved in protein synthesis of a specialized repertoire of mRNAs and, together with other initiation factors, stimulates binding of mRNA and methionyl-tRNAi to the 40S ribosome. The eIF-3 complex specifically targets and initiates translation of a subset of mRNAs involved in cell proliferation. In Aspergillus fumigatus (strain CBS 144.89 / FGSC A1163 / CEA10) (Neosartorya fumigata), this protein is Eukaryotic translation initiation factor 3 subunit M.